A 208-amino-acid chain; its full sequence is MQNVKLISHPLIEHKLTILRDKNTQPFQFRMLVDEISYLMIFEATRNLKVKDVKVQTPVALADAKRLTTKVMICPILRAALGMLDSVFTIIPDASVGFLGFQRNEETAQAEFFYAKLPKDAKERMAIIIDPMFATGGTAIDAVKFLREKGVKEIKFISIIAAPEGLKRFSEIYPDVEVYTASIDEKLNEKNYIVPGLGDAGDRVFNTL.

5-phospho-alpha-D-ribose 1-diphosphate contacts are provided by residues arginine 78, arginine 103, and 130-138 (DPMFATGGT). Residues isoleucine 193 and 198–200 (GDA) each bind uracil. Aspartate 199 serves as a coordination point for 5-phospho-alpha-D-ribose 1-diphosphate.

This sequence belongs to the UPRTase family. It depends on Mg(2+) as a cofactor.

The enzyme catalyses UMP + diphosphate = 5-phospho-alpha-D-ribose 1-diphosphate + uracil. It functions in the pathway pyrimidine metabolism; UMP biosynthesis via salvage pathway; UMP from uracil: step 1/1. Allosterically activated by GTP. Functionally, catalyzes the conversion of uracil and 5-phospho-alpha-D-ribose 1-diphosphate (PRPP) to UMP and diphosphate. In Campylobacter concisus (strain 13826), this protein is Uracil phosphoribosyltransferase.